A 216-amino-acid chain; its full sequence is MTDYDFEHLDTSALPVRQRRILEVIRDWVVEHGYAPSTRQIGAAVGLRSMSSVARHLRSLEERGFLRRGEGVARPIDVRLFLHGTAAAAPSEDAVTVPVVGDIAAGAPILAEEHTDDLLTLPRELVGRGTVFALRVRGDSMIDAAICDGDTVVVRSQREANSGDIVAAMIGEEATVKVFRRRNGHVLLEPRNPAYDVIDGDEAVILGKVVSVLRRI.

The segment at residues 38–58 (TRQIGAAVGLRSMSSVARHLR) is a DNA-binding region (H-T-H motif). Catalysis depends on for autocatalytic cleavage activity residues S140 and K177.

Belongs to the peptidase S24 family. In terms of assembly, homodimer.

It catalyses the reaction Hydrolysis of Ala-|-Gly bond in repressor LexA.. Functionally, represses a number of genes involved in the response to DNA damage (SOS response), including recA and lexA. In the presence of single-stranded DNA, RecA interacts with LexA causing an autocatalytic cleavage which disrupts the DNA-binding part of LexA, leading to derepression of the SOS regulon and eventually DNA repair. The chain is LexA repressor 1 from Nocardia farcinica (strain IFM 10152).